A 56-amino-acid polypeptide reads, in one-letter code: Ovomucoid (56 aa).

The region spanning 6-56 (VDCSEYPKPACTLEHRPLCGSDNKTYGNKCNFCNAVVESNGTLTLSHFGKC) is the Kazal-like domain. 3 disulfide bridges follow: cysteine 8–cysteine 38, cysteine 16–cysteine 35, and cysteine 24–cysteine 56. N-linked (GlcNAc...) asparagine glycosylation is present at asparagine 45.

The protein resides in the secreted. The chain is Ovomucoid from Pavo cristatus (Indian peafowl).